The sequence spans 1069 residues: Protocadherin-8 (1069 aa).

The N-terminal stretch at 1–29 (MSPVKRWGSPCLFPLQLFSLCWVLSVAQS) is a signal peptide. Cadherin domains lie at 30 to 135 (KTVR…APRF), 136 to 245 (PRAQ…SPAF), 247 to 354 (QGAV…APDI), 393 to 497 (QETG…APLF), 498 to 609 (TKPV…SPVL), and 615 to 721 (ANGS…VPAS). At 30-747 (KTVRYSTFEE…SGPSLQWDTP (718 aa)) the chain is on the extracellular side. An N-linked (GlcNAc...) asparagine glycan is attached at asparagine 616. The interval 719–738 (PASAGSPEHFRPPGSRLAPS) is disordered. The chain crosses the membrane as a helical span at residues 748–768 (LIVIIVLAGSCTLLLAAIIAI). Over 769–1069 (ATTCNRRKKE…SPKKGTNENV (301 aa)) the chain is Cytoplasmic. 3 disordered regions span residues 777 to 859 (KEVR…TGES), 905 to 927 (REAE…DSDS), and 1031 to 1069 (LSPP…NENV). Composition is skewed to basic and acidic residues over residues 780–790 (RKGGALREERP) and 905–920 (REAE…KGDS). Phosphoserine is present on serine 1052.

In terms of assembly, the N-terminal extracellular domain forms homophilic interactions; these interactions activate p38 MAPK via TAOK2 and trigger endocytosis. Interacts with CDH2; this interaction may lead to CDH2 cointernalization. Interacts with CDH11. Interacts with TAOK2. Enriched in brain relative to peripheral tissues, with low expression in the testis. Expressed in hippocampal neurons (at protein level).

It is found in the cell membrane. Its subcellular location is the cell projection. The protein resides in the dendrite. The protein localises to the presynaptic cell membrane. It localises to the postsynaptic cell membrane. Calcium-dependent cell-adhesion protein. May play a role in activity-induced synaptic reorganization underlying long term memory. Could be involved in CDH2 internalization through TAOK2/p38 MAPK pathway. In hippocampal neurons, may play a role in the down-regulation of dendritic spines, maybe through its action on CDH2 endocytosis. In Rattus norvegicus (Rat), this protein is Protocadherin-8 (Pcdh8).